The sequence spans 99 residues: Cytochrome c2 iso-1 (99 aa).

Heme c-binding residues include cysteine 10, cysteine 13, histidine 14, and methionine 75.

It belongs to the cytochrome c family. Post-translationally, binds 1 heme c group covalently per subunit.

Functionally, cytochrome c2 is found mainly in purple, non-sulfur, photosynthetic bacteria where it functions as the electron donor to the oxidized bacteriochlorophyll in the photophosphorylation pathway. However, it may also have a role in the respiratory chain and is found in some non-photosynthetic bacteria. This chain is Cytochrome c2 iso-1, found in Magnetospirillum fulvum (Rhodospirillum fulvum).